A 461-amino-acid polypeptide reads, in one-letter code: Cysteine--tRNA ligase (461 aa).

A Zn(2+)-binding site is contributed by Cys28. The 'HIGH' region motif lies at 30-40 (ITVYDLCHIGH). Positions 209, 234, and 238 each coordinate Zn(2+). Residues 266 to 270 (KMSKS) carry the 'KMSKS' region motif. Position 269 (Lys269) interacts with ATP.

The protein belongs to the class-I aminoacyl-tRNA synthetase family. Monomer. Zn(2+) serves as cofactor.

The protein localises to the cytoplasm. It carries out the reaction tRNA(Cys) + L-cysteine + ATP = L-cysteinyl-tRNA(Cys) + AMP + diphosphate. The chain is Cysteine--tRNA ligase from Escherichia coli (strain SMS-3-5 / SECEC).